Consider the following 272-residue polypeptide: 4-diphosphocytidyl-2-C-methyl-D-erythritol kinase (272 aa).

Residue Lys14 is part of the active site. Position 92–102 (Pro92–Ser102) interacts with ATP. Asp132 is a catalytic residue.

This sequence belongs to the GHMP kinase family. IspE subfamily.

It catalyses the reaction 4-CDP-2-C-methyl-D-erythritol + ATP = 4-CDP-2-C-methyl-D-erythritol 2-phosphate + ADP + H(+). It functions in the pathway isoprenoid biosynthesis; isopentenyl diphosphate biosynthesis via DXP pathway; isopentenyl diphosphate from 1-deoxy-D-xylulose 5-phosphate: step 3/6. Functionally, catalyzes the phosphorylation of the position 2 hydroxy group of 4-diphosphocytidyl-2C-methyl-D-erythritol. In Fervidobacterium nodosum (strain ATCC 35602 / DSM 5306 / Rt17-B1), this protein is 4-diphosphocytidyl-2-C-methyl-D-erythritol kinase.